The sequence spans 114 residues: UPF0342 protein LVIS_1488 (114 aa).

It belongs to the UPF0342 family.

The protein is UPF0342 protein LVIS_1488 of Levilactobacillus brevis (strain ATCC 367 / BCRC 12310 / CIP 105137 / JCM 1170 / LMG 11437 / NCIMB 947 / NCTC 947) (Lactobacillus brevis).